Here is a 309-residue protein sequence, read N- to C-terminus: Ribosomal RNA small subunit methyltransferase H (309 aa).

Residues 32–34 (AGH), aspartate 52, phenylalanine 79, aspartate 100, and glutamine 107 contribute to the S-adenosyl-L-methionine site.

It belongs to the methyltransferase superfamily. RsmH family.

It localises to the cytoplasm. The enzyme catalyses cytidine(1402) in 16S rRNA + S-adenosyl-L-methionine = N(4)-methylcytidine(1402) in 16S rRNA + S-adenosyl-L-homocysteine + H(+). Specifically methylates the N4 position of cytidine in position 1402 (C1402) of 16S rRNA. The protein is Ribosomal RNA small subunit methyltransferase H of Mycoplasma capricolum subsp. capricolum (strain California kid / ATCC 27343 / NCTC 10154).